Here is a 319-residue protein sequence, read N- to C-terminus: Phospho-N-acetylmuramoyl-pentapeptide-transferase (319 aa).

Helical transmembrane passes span 1-21, 53-73, 77-97, 117-137, 140-160, 172-192, 195-215, 221-241, 249-269, and 298-318; these read MSIL…FLLM, TMGG…VGAW, LNGT…IGMW, FLAQ…EGFQ, FGLT…MVGF, GLVT…ALVQ, TEVA…FPFN, IFMG…VALV, LIIG…VAYF, and GVFW…ILFL.

The protein belongs to the glycosyltransferase 4 family. MraY subfamily. Mg(2+) is required as a cofactor.

The protein localises to the cell membrane. It carries out the reaction UDP-N-acetyl-alpha-D-muramoyl-L-alanyl-gamma-D-glutamyl-L-lysyl-D-alanyl-D-alanine + di-trans,octa-cis-undecaprenyl phosphate = Mur2Ac(oyl-L-Ala-gamma-D-Glu-L-Lys-D-Ala-D-Ala)-di-trans,octa-cis-undecaprenyl diphosphate + UMP. The protein operates within cell wall biogenesis; peptidoglycan biosynthesis. In terms of biological role, catalyzes the initial step of the lipid cycle reactions in the biosynthesis of the cell wall peptidoglycan: transfers peptidoglycan precursor phospho-MurNAc-pentapeptide from UDP-MurNAc-pentapeptide onto the lipid carrier undecaprenyl phosphate, yielding undecaprenyl-pyrophosphoryl-MurNAc-pentapeptide, known as lipid I. The sequence is that of Phospho-N-acetylmuramoyl-pentapeptide-transferase from Limosilactobacillus fermentum (strain NBRC 3956 / LMG 18251) (Lactobacillus fermentum).